Consider the following 74-residue polypeptide: uncharacterized protein (74 aa).

2 consecutive transmembrane segments (helical) span residues 3-23 (YSAL…CFSF) and 35-55 (ILFF…MLLT).

It localises to the cell membrane. This is an uncharacterized protein from Mycoplasma genitalium (strain ATCC 33530 / DSM 19775 / NCTC 10195 / G37) (Mycoplasmoides genitalium).